A 127-amino-acid polypeptide reads, in one-letter code: Protein ApaG (127 aa).

The region spanning 3–127 (ANSPPTIKCN…FRLAIPNILH (125 aa)) is the ApaG domain.

This chain is Protein ApaG, found in Photobacterium profundum (strain SS9).